We begin with the raw amino-acid sequence, 129 residues long: Small ribosomal subunit protein uS11 (129 aa).

It belongs to the universal ribosomal protein uS11 family. Part of the 30S ribosomal subunit. Interacts with proteins S7 and S18. Binds to IF-3.

Its function is as follows. Located on the platform of the 30S subunit, it bridges several disparate RNA helices of the 16S rRNA. Forms part of the Shine-Dalgarno cleft in the 70S ribosome. The chain is Small ribosomal subunit protein uS11 from Aeromonas hydrophila subsp. hydrophila (strain ATCC 7966 / DSM 30187 / BCRC 13018 / CCUG 14551 / JCM 1027 / KCTC 2358 / NCIMB 9240 / NCTC 8049).